A 197-amino-acid chain; its full sequence is LexA repressor (197 aa).

Positions 28–47 (VREIARRFRITPRGAQLHLV) form a DNA-binding region, H-T-H motif. Residues serine 119 and lysine 156 each act as for autocatalytic cleavage activity in the active site.

This sequence belongs to the peptidase S24 family. Homodimer.

The enzyme catalyses Hydrolysis of Ala-|-Gly bond in repressor LexA.. Represses a number of genes involved in the response to DNA damage (SOS response), including recA and lexA. In the presence of single-stranded DNA, RecA interacts with LexA causing an autocatalytic cleavage which disrupts the DNA-binding part of LexA, leading to derepression of the SOS regulon and eventually DNA repair. This is LexA repressor from Thermotoga neapolitana.